A 162-amino-acid polypeptide reads, in one-letter code: Crossover junction endodeoxyribonuclease RuvC (162 aa).

Residues D7, E67, and D140 contribute to the active site. The Mg(2+) site is built by D7, E67, and D140.

This sequence belongs to the RuvC family. In terms of assembly, homodimer which binds Holliday junction (HJ) DNA. The HJ becomes 2-fold symmetrical on binding to RuvC with unstacked arms; it has a different conformation from HJ DNA in complex with RuvA. In the full resolvosome a probable DNA-RuvA(4)-RuvB(12)-RuvC(2) complex forms which resolves the HJ. The cofactor is Mg(2+).

The protein resides in the cytoplasm. The enzyme catalyses Endonucleolytic cleavage at a junction such as a reciprocal single-stranded crossover between two homologous DNA duplexes (Holliday junction).. The RuvA-RuvB-RuvC complex processes Holliday junction (HJ) DNA during genetic recombination and DNA repair. Endonuclease that resolves HJ intermediates. Cleaves cruciform DNA by making single-stranded nicks across the HJ at symmetrical positions within the homologous arms, yielding a 5'-phosphate and a 3'-hydroxyl group; requires a central core of homology in the junction. The consensus cleavage sequence is 5'-(A/T)TT(C/G)-3'. Cleavage occurs on the 3'-side of the TT dinucleotide at the point of strand exchange. HJ branch migration catalyzed by RuvA-RuvB allows RuvC to scan DNA until it finds its consensus sequence, where it cleaves and resolves the cruciform DNA. In Pseudothermotoga lettingae (strain ATCC BAA-301 / DSM 14385 / NBRC 107922 / TMO) (Thermotoga lettingae), this protein is Crossover junction endodeoxyribonuclease RuvC.